The chain runs to 1367 residues: Flocculation protein FLO11 (1367 aa).

The signal sequence occupies residues 1 to 21; that stretch reads MQRPFLLAYLVLSLLFNSALG. Residues 31–207 enclose the Flo11 domain; the sequence is SSEGTSCNSI…NIDCDNNCGG (177 aa). Intrachain disulfides connect C37–C201, C44–C179, and C141–C205. The span at 209 to 267 shows a compositional bias: low complexity; the sequence is KSSTTTSSTSESSTTTSSTSESSTTTSSTSESSTTTSSTSESSTSSSTTAPATPTTTSC. 2 disordered regions span residues 209–975 and 1008–1032; these read KSST…TTSV and TTTVPCSTSPSETASESTTTSPTTP. Tandem repeats lie at residues 210 to 219, 220 to 229, 230 to 239, 240 to 249, 262 to 274, 275 to 287, 313 to 327, 328 to 342, 343 to 354, 355 to 369, 370 to 381, 382 to 393, 394 to 408, 409 to 420, 421 to 432, 433 to 444, 445 to 456, 457 to 471, 472 to 483, 484 to 498, 499 to 510, 511 to 525, 526 to 540, 541 to 552, 568 to 579, 580 to 594, 595 to 609, 610 to 624, 625 to 636, 637 to 651, 652 to 666, 667 to 681, 682 to 693, 694 to 705, 706 to 720, 721 to 735, 736 to 750, 751 to 762, 763 to 777, 778 to 792, 808 to 822, 838 to 852, 865 to 879, 937 to 968, and 981 to 1012. Residues 210–249 are 4 X 10 AA repeats, Ser/Thr-rich; it reads SSTTTSSTSESSTTTSSTSESSTTTSSTSESSTTTSSTSE. Residues 262–287 are 2 X 13 AA repeats, Thr-rich; that stretch reads PTTTSCTKEKPTPPTTTSCTKEKPTP. Residues 281–292 show a composition bias toward basic and acidic residues; sequence TKEKPTPPHHDT. Low complexity-rich tracts occupy residues 302-900 and 910-948; these read TSKT…TVTP and TETSVSSTTETTIVPTKTTTSVTTPSTTTITTTVCSTGT. The segment at 313 to 852 is 22 X 15 AA approximate repeats, Ser-rich; it reads PVPTPSSSTT…SSSTTESSSA (540 aa). The interval 343–762 is 15 X 12 AA repeats, Ser/Thr-rich; the sequence is PVTSSTTESS…TSSTTESSSA (420 aa). N817 carries an N-linked (GlcNAc...) asparagine glycan. N874 carries an N-linked (GlcNAc...) asparagine glycan. The 3 X 32 AA tandem repeats, Thr-rich stretch occupies residues 937–1119; sequence TTITTTVCST…SPKTVTTTVP (183 aa). The segment covering 949-961 has biased composition (polar residues); it reads NSAGETTSGCSPK. Over residues 962-975 the composition is skewed to low complexity; the sequence is TVTTTVPTTTTTSV. Residues 1014-1032 show a composition bias toward low complexity; sequence STSPSETASESTTTSPTTP. A 5-3 repeat occupies 1088-1119; sequence TTITTTVCSTGTNSAGETTSGCSPKTVTTTVP. G1346 is lipidated: GPI-anchor amidated glycine. Residues 1347 to 1367 constitute a propeptide, removed in mature form; it reads AANIKVLGNFMWLLLALPVVF.

The protein belongs to the flocculin family. Highly divergent. In terms of processing, extensively O-mannosylated. Post-translationally, the GPI-anchor is attached to the protein in the endoplasmic reticulum and serves to target the protein to the cell surface. There, the glucosamine-inositol phospholipid moiety is cleaved off and the GPI-modified mannoprotein is covalently attached via its lipidless GPI glycan remnant to the 1,6-beta-glucan of the outer cell wall layer. A soluble form is probably produced by proteolytic cleavage at the cell surface (shedding).

The protein localises to the secreted. The protein resides in the cell wall. It is found in the membrane. Homophilic binding protein that enables kin discrimination in heterogeneous yeast populations by mediating homotypic cell-cell interactions during flocculation, a reversible and asexual process in which cells adhere to form aggregates (flocs). Plays a role in cell-substrate adhesion, haploid invasive growth, diploid pseudohyphae formation and biofilm (flor) development. Adhesive activity is inhibited by mannose, but not by glucose, maltose, sucrose or galactose. The sequence is that of Flocculation protein FLO11 from Saccharomyces cerevisiae (strain ATCC 204508 / S288c) (Baker's yeast).